Reading from the N-terminus, the 111-residue chain is Cornifelin homolog B (111 aa).

It belongs to the cornifelin family.

The sequence is that of Cornifelin homolog B (cnfn-b) from Xenopus laevis (African clawed frog).